The following is a 163-amino-acid chain: Photosystem II extrinsic protein V (163 aa).

A signal peptide spans 1–26 (MFKKSYQFFALVLFSIFNVLVTSASA). Heme c contacts are provided by C63, C66, H67, and H118.

The protein belongs to the cytochrome c family. PsbV subfamily. In terms of assembly, PSII is composed of 1 copy each of membrane proteins PsbA, PsbB, PsbC, PsbD, PsbE, PsbF, PsbH, PsbI, PsbJ, PsbK, PsbL, PsbM, PsbT, PsbY, PsbZ, Psb30/Ycf12, at least 3 peripheral proteins of the oxygen-evolving complex and a large number of cofactors. It forms dimeric complexes. Requires heme c as cofactor.

It is found in the plastid. It localises to the chloroplast thylakoid membrane. Functionally, one of the extrinsic, lumenal subunits of photosystem II (PSII). PSII is a light-driven water plastoquinone oxidoreductase, using light energy to abstract electrons from H(2)O, generating a proton gradient subsequently used for ATP formation. The extrinsic proteins stabilize the structure of photosystem II oxygen-evolving complex (OEC), the ion environment of oxygen evolution and protect the OEC against heat-induced inactivation. In Trieres chinensis (Marine centric diatom), this protein is Photosystem II extrinsic protein V.